The primary structure comprises 205 residues: Protein-L-isoaspartate O-methyltransferase (205 aa).

Ser-52 is an active-site residue.

Belongs to the methyltransferase superfamily. L-isoaspartyl/D-aspartyl protein methyltransferase family.

The protein localises to the cytoplasm. It catalyses the reaction [protein]-L-isoaspartate + S-adenosyl-L-methionine = [protein]-L-isoaspartate alpha-methyl ester + S-adenosyl-L-homocysteine. Its function is as follows. Catalyzes the methyl esterification of L-isoaspartyl residues in peptides and proteins that result from spontaneous decomposition of normal L-aspartyl and L-asparaginyl residues. It plays a role in the repair and/or degradation of damaged proteins. The polypeptide is Protein-L-isoaspartate O-methyltransferase (Gloeobacter violaceus (strain ATCC 29082 / PCC 7421)).